The following is a 343-amino-acid chain: N-acetylornithine carbamoyltransferase (343 aa).

Carbamoyl phosphate is bound by residues 49–52, Trp77, and Arg112; that span reads SMRT. Glu144 contributes to the N(2)-acetyl-L-ornithine binding site. A carbamoyl phosphate-binding site is contributed by 148-151; that stretch reads HPCQ. Positions 252 and 295 each coordinate N(2)-acetyl-L-ornithine. 294–295 lines the carbamoyl phosphate pocket; that stretch reads CL. At Lys302 the chain carries N6-carboxylysine. Arg322 contributes to the carbamoyl phosphate binding site.

It belongs to the aspartate/ornithine carbamoyltransferase superfamily. AOTCase family. In terms of assembly, homotrimer.

The protein resides in the cytoplasm. The enzyme catalyses N(2)-acetyl-L-ornithine + carbamoyl phosphate = N(2)-acetyl-L-citrulline + phosphate + H(+). The protein operates within amino-acid biosynthesis; L-arginine biosynthesis. Its activity is regulated as follows. Carboxylation at Lys-302 increases the catalytic activity of the enzyme. Catalyzes the transfer of the carbamoyl group from carbamoyl phosphate to the delta-amino group of N(2)-acetyl-L-ornithine to produce N(2)-acetyl-L-citrulline. This is a step in an alternative arginine biosynthesis pathway. The enzyme has no activity with ornithine. This chain is N-acetylornithine carbamoyltransferase, found in Xanthomonas axonopodis pv. citri (strain 306).